The following is a 1035-amino-acid chain: FACT complex subunit SPT16 (1035 aa).

Residues 208 to 234 adopt a coiled-coil conformation; it reads EELKITNAKLSDKIENKIDDVKFLKQL. The disordered stretch occupies residues 448–496; it reads NNEEEDNNKKKSSPATKVPSKPDRNSKILRTKLRGEARGGAEDAQKEQI. The segment covering 480-496 has biased composition (basic and acidic residues); that stretch reads LRGEARGGAEDAQKEQI. At serine 526 the chain carries Phosphoserine. Positions 636 to 666 form a coiled coil; the sequence is MSETFKQIADLKKEATKREQERKALADVVQQ. At serine 765 the chain carries Phosphoserine. Disordered stretches follow at residues 768 to 796 and 956 to 1035; these read SVDETGGGRRGQSRFRRYGDEDELEQEQE and GSDD…NFRD. Residues 957–1019 are compositionally biased toward acidic residues; the sequence is SDDEASDESE…ESEEGEDWDE (63 aa). A coiled-coil region spans residues 959 to 983; sequence DEASDESEEEVSEYEASEDDVSDES. A compositionally biased stretch (basic and acidic residues) spans 1020–1035; that stretch reads LEKKAARADRGANFRD.

It belongs to the peptidase M24 family. SPT16 subfamily. As to quaternary structure, forms a stable heterodimer with POB3. The SPT16-POB3 dimer weakly associates with multiple molecules of NHP6 (NHP6A or NHP6B) to form the FACT (yFACT or SNP) complex. The FACT complex interacts with the CK2 (casein kinase II) complex subunits CKA1, CKA2, CKB1 and CKB2 and the components of the transcription machinery CHD1, CTR9, PAF1 and CDC73. The FACT complex interacts with the PAF1 complex. Interacts with POL1. Interacts with SAS3. Interacts with YTA7.

The protein localises to the nucleus. It is found in the chromosome. Its function is as follows. Component of the FACT complex, a general chromatin factor that acts to reorganize nucleosomes. The FACT complex is involved in multiple processes that require DNA as a template such as mRNA elongation, DNA replication and DNA repair. During transcription elongation the FACT complex acts as a histone chaperone that both destabilizes and restores nucleosomal structure. It facilitates the passage of RNA polymerase II and transcription by promoting the dissociation of one histone H2A-H2B dimer from the nucleosome, then subsequently promotes the reestablishment of the nucleosome following the passage of RNA polymerase II. Transcription elongation is promoted by the repression of transcription initiation from cryptic sites. Also acts in establishing transcription initiation complexes and promotes SPT15/TBP-binding to a TATA box. Together with replication factor-A protein (RPA), FACT may play a role in nucleosome deposition during DNA replication. The protein is FACT complex subunit SPT16 (SPT16) of Saccharomyces cerevisiae (strain ATCC 204508 / S288c) (Baker's yeast).